A 273-amino-acid polypeptide reads, in one-letter code: Dermonecrotic toxin LdSicTox-alphaIB1av (273 aa).

The active site involves His5. 2 residues coordinate Mg(2+): Glu25 and Asp27. The active-site Nucleophile is the His41. Cystine bridges form between Cys45-Cys51 and Cys47-Cys190. Residue Asp85 coordinates Mg(2+). An N-linked (GlcNAc...) asparagine glycan is attached at Asn250.

The protein belongs to the arthropod phospholipase D family. Class II subfamily. Mg(2+) is required as a cofactor. In terms of tissue distribution, expressed by the venom gland.

It is found in the secreted. The catalysed reaction is an N-(acyl)-sphingosylphosphocholine = an N-(acyl)-sphingosyl-1,3-cyclic phosphate + choline. The enzyme catalyses an N-(acyl)-sphingosylphosphoethanolamine = an N-(acyl)-sphingosyl-1,3-cyclic phosphate + ethanolamine. It carries out the reaction a 1-acyl-sn-glycero-3-phosphocholine = a 1-acyl-sn-glycero-2,3-cyclic phosphate + choline. It catalyses the reaction a 1-acyl-sn-glycero-3-phosphoethanolamine = a 1-acyl-sn-glycero-2,3-cyclic phosphate + ethanolamine. Dermonecrotic toxins cleave the phosphodiester linkage between the phosphate and headgroup of certain phospholipids (sphingolipid and lysolipid substrates), forming an alcohol (often choline) and a cyclic phosphate. This toxin acts on sphingomyelin (SM). It may also act on ceramide phosphoethanolamine (CPE), lysophosphatidylcholine (LPC) and lysophosphatidylethanolamine (LPE), but not on lysophosphatidylserine (LPS), and lysophosphatidylglycerol (LPG). It acts by transphosphatidylation, releasing exclusively cyclic phosphate products as second products. Induces dermonecrosis, hemolysis, increased vascular permeability, edema, inflammatory response, and platelet aggregation. This is Dermonecrotic toxin LdSicTox-alphaIB1av from Loxosceles deserta (Desert recluse spider).